A 502-amino-acid polypeptide reads, in one-letter code: ATP synthase subunit alpha (502 aa).

169 to 176 (GDRQTGKT) provides a ligand contact to ATP.

The protein belongs to the ATPase alpha/beta chains family. F-type ATPases have 2 components, CF(1) - the catalytic core - and CF(0) - the membrane proton channel. CF(1) has five subunits: alpha(3), beta(3), gamma(1), delta(1), epsilon(1). CF(0) has three main subunits: a(1), b(2) and c(9-12). The alpha and beta chains form an alternating ring which encloses part of the gamma chain. CF(1) is attached to CF(0) by a central stalk formed by the gamma and epsilon chains, while a peripheral stalk is formed by the delta and b chains.

It is found in the cell membrane. The catalysed reaction is ATP + H2O + 4 H(+)(in) = ADP + phosphate + 5 H(+)(out). In terms of biological role, produces ATP from ADP in the presence of a proton gradient across the membrane. The alpha chain is a regulatory subunit. In Bacillus sp. (strain PS3), this protein is ATP synthase subunit alpha.